We begin with the raw amino-acid sequence, 280 residues long: F420-dependent methylenetetrahydromethanopterin dehydrogenase (280 aa).

The protein belongs to the MTD family.

The enzyme catalyses 5,10-methylenetetrahydromethanopterin + oxidized coenzyme F420-(gamma-L-Glu)(n) + 2 H(+) = 5,10-methenyl-5,6,7,8-tetrahydromethanopterin + reduced coenzyme F420-(gamma-L-Glu)(n). It participates in one-carbon metabolism; methanogenesis from CO(2); 5,10-methylene-5,6,7,8-tetrahydromethanopterin from 5,10-methenyl-5,6,7,8-tetrahydromethanopterin (coenzyme F420 route): step 1/1. Functionally, catalyzes the reversible reduction of methenyl-H(4)MPT(+) to methylene-H(4)MPT. This is F420-dependent methylenetetrahydromethanopterin dehydrogenase from Methanospirillum hungatei JF-1 (strain ATCC 27890 / DSM 864 / NBRC 100397 / JF-1).